We begin with the raw amino-acid sequence, 108 residues long: Putative lipid-binding protein AIR1B (108 aa).

Residues 1-23 form the signal peptide; it reads MAPRTSLALFVSLNLLFFTCTSA. Intrachain disulfides connect cysteine 28/cysteine 55, cysteine 35/cysteine 54, and cysteine 71/cysteine 107.

Belongs to the plant LTP family. PEARLI1 subfamily.

It localises to the secreted. The sequence is that of Putative lipid-binding protein AIR1B (AIR1B) from Arabidopsis thaliana (Mouse-ear cress).